The sequence spans 482 residues: tRNA sulfurtransferase (482 aa).

A THUMP domain is found at 61–165 (QQVLEILTTT…DDKLNQILAH (105 aa)). ATP-binding positions include 183–184 (LI), Lys-265, Gly-287, and Gln-296. The cysteines at positions 344 and 456 are disulfide-linked. Positions 404–482 (IEEHAVVLDI…GFNNVKVYRP (79 aa)) constitute a Rhodanese domain. The active-site Cysteine persulfide intermediate is the Cys-456.

The protein belongs to the ThiI family.

It is found in the cytoplasm. The catalysed reaction is [ThiI sulfur-carrier protein]-S-sulfanyl-L-cysteine + a uridine in tRNA + 2 reduced [2Fe-2S]-[ferredoxin] + ATP + H(+) = [ThiI sulfur-carrier protein]-L-cysteine + a 4-thiouridine in tRNA + 2 oxidized [2Fe-2S]-[ferredoxin] + AMP + diphosphate. The enzyme catalyses [ThiS sulfur-carrier protein]-C-terminal Gly-Gly-AMP + S-sulfanyl-L-cysteinyl-[cysteine desulfurase] + AH2 = [ThiS sulfur-carrier protein]-C-terminal-Gly-aminoethanethioate + L-cysteinyl-[cysteine desulfurase] + A + AMP + 2 H(+). It functions in the pathway cofactor biosynthesis; thiamine diphosphate biosynthesis. Its function is as follows. Catalyzes the ATP-dependent transfer of a sulfur to tRNA to produce 4-thiouridine in position 8 of tRNAs, which functions as a near-UV photosensor. Also catalyzes the transfer of sulfur to the sulfur carrier protein ThiS, forming ThiS-thiocarboxylate. This is a step in the synthesis of thiazole, in the thiamine biosynthesis pathway. The sulfur is donated as persulfide by IscS. The chain is tRNA sulfurtransferase from Vibrio vulnificus (strain YJ016).